The primary structure comprises 482 residues: Probable polyamine transporter At1g31820 (482 aa).

11 helical membrane passes run V36–A56, L66–I86, F94–F114, V143–L163, L171–V191, V254–L274, G294–A314, T344–F364, I367–V387, T406–L426, and I429–L449.

The protein belongs to the amino acid-polyamine-organocation (APC) superfamily. Polyamine:cation symporter (PHS) (TC 2.A.3.12) family.

The protein localises to the cell membrane. Probable cell membrane polyamine/proton symporter involved in the polyamine uptake in cells. This chain is Probable polyamine transporter At1g31820, found in Arabidopsis thaliana (Mouse-ear cress).